Reading from the N-terminus, the 1045-residue chain is Collagen alpha-1(VI) chain (1045 aa).

The N-terminal stretch at 1-24 (MKMLQGRLPLTVLHLFLLLGGGMT) is a signal peptide. One can recognise a VWFA 1 domain in the interval 65–255 (DIFFVLDTSE…LTDDEIDNTI (191 aa)). A disordered region spans residues 277–613 (PSRGLSGPSG…GPPGPGGPPG (337 aa)). A triple-helical region region spans residues 280–540 (GLSGPSGPPG…RGDDGRPGNG (261 aa)). Low complexity predominate over residues 297–309 (PGLPGDRGLPGDP). Residues 327 to 360 (QGIRGEKGGRGAKGSKGDKGKRGIDGVDGQKGED) are compositionally biased toward basic and acidic residues. The segment covering 375 to 392 (DGAPGSSGPKGDPGPYGT) has biased composition (low complexity). Positions 400–409 (GTPGTGGRPG) are enriched in gly residues. 2 short sequence motifs (cell attachment site) span residues 501–503 (RGD) and 554–556 (RGD). Residues 600 to 613 (EGPPGPPGPGGPPG) are compositionally biased toward pro residues. VWFA domains lie at 638-825 (DLLF…LHNV) and 849-1035 (DITM…YQSI).

The protein belongs to the type VI collagen family.

The protein localises to the secreted. The protein resides in the extracellular space. It localises to the extracellular matrix. Collagen VI acts as a cell-binding protein. The protein is Collagen alpha-1(VI) chain (col6a1) of Xenopus laevis (African clawed frog).